A 282-amino-acid polypeptide reads, in one-letter code: Protoheme IX farnesyltransferase (282 aa).

9 helical membrane-spanning segments follow: residues 9–29 (LAKP…FLLA), 39–59 (LPLF…GCVF), 79–99 (LVTG…LLIL), 102–122 (LVLY…GFIV), 139–159 (VLGG…VVNI), 165–185 (LALF…IAML), 210–230 (IMLF…VLGS), 231–251 (ADLF…YKSI), and 261–281 (VFAK…CLTM).

The protein belongs to the UbiA prenyltransferase family. Protoheme IX farnesyltransferase subfamily.

Its subcellular location is the cell inner membrane. The catalysed reaction is heme b + (2E,6E)-farnesyl diphosphate + H2O = Fe(II)-heme o + diphosphate. Its pathway is porphyrin-containing compound metabolism; heme O biosynthesis; heme O from protoheme: step 1/1. In terms of biological role, converts heme B (protoheme IX) to heme O by substitution of the vinyl group on carbon 2 of heme B porphyrin ring with a hydroxyethyl farnesyl side group. The chain is Protoheme IX farnesyltransferase from Francisella tularensis subsp. holarctica (strain FTNF002-00 / FTA).